The sequence spans 199 residues: Recombination protein RecR (199 aa).

The C4-type zinc-finger motif lies at 57 to 72 (CSICGNITESDPCEIC). In terms of domain architecture, Toprim spans 80–176 (STIMVVEQPK…KVTRLAAGLA (97 aa)).

It belongs to the RecR family.

Its function is as follows. May play a role in DNA repair. It seems to be involved in an RecBC-independent recombinational process of DNA repair. It may act with RecF and RecO. The sequence is that of Recombination protein RecR from Lactobacillus johnsonii (strain CNCM I-12250 / La1 / NCC 533).